A 1050-amino-acid chain; its full sequence is Inositol hexakisphosphate kinase 1 (1050 aa).

Disordered stretches follow at residues 87–117 (KITR…LSSS), 129–177 (PAIK…IQNV), 269–319 (RQEN…DNEH), and 396–423 (SDLD…NNND). Ser-150 carries the phosphoserine modification. Over residues 156-173 (KQQSHQPQVLHHQTSLKP) the composition is skewed to polar residues. Over residues 290-306 (ESIKEKPNTFEQDKEGE) the composition is skewed to basic and acidic residues. A compositionally biased stretch (acidic residues) spans 307–316 (QADEEEDEGD). Ser-396 carries the post-translational modification Phosphoserine. Positions 402–417 (NNGKNDTSNENKDIEV) are enriched in basic and acidic residues. Ser-469 bears the Phosphoserine mark. A compositionally biased stretch (low complexity) spans 508–522 (NDSYFSSSSSHNSCS). Disordered regions lie at residues 508–539 (NDSY…DSGS) and 562–625 (RKRN…PNLQ). 8 positions are modified to phosphoserine: Ser-537, Ser-539, Ser-566, Ser-583, Ser-589, Ser-646, Ser-664, and Ser-670. The segment covering 566-624 (SNTTTMGNHNARLGSSPSFLTQKSRASSHDASNTSMKTLGDSSSQASLQMDDSKVNPNL) has biased composition (polar residues). 772–780 (PCALDLKMG) contacts substrate.

The protein belongs to the inositol phosphokinase (IPK) family.

The protein resides in the cytoplasm. It carries out the reaction 1D-myo-inositol hexakisphosphate + ATP = 5-diphospho-1D-myo-inositol 1,2,3,4,6-pentakisphosphate + ADP. The enzyme catalyses 1-diphospho-1D-myo-inositol 2,3,4,5,6-pentakisphosphate + ATP + H(+) = 1,5-bis(diphospho)-1D-myo-inositol 2,3,4,6-tetrakisphosphate + ADP. In terms of biological role, converts inositol hexakisphosphate (InsP6) to diphosphoinositol pentakisphosphate (InsP7/PP-InsP5). Involved in phosphate regulation and polyphosphate accumulation. Required for resistance to salt stress, cell wall integrity, vacuole morphogenesis, and telomere maintenance. In Saccharomyces cerevisiae (strain ATCC 204508 / S288c) (Baker's yeast), this protein is Inositol hexakisphosphate kinase 1 (KCS1).